The following is a 1201-amino-acid chain: Potassium channel subfamily T member 1 (1201 aa).

The segment at 1-28 is disordered; sequence MARAKLKNSPSESNSHVKTVPPATTEDV. Residues 1–92 are Cytoplasmic-facing; that stretch reads MARAKLKNSP…FFIKNQRSSL (92 aa). A compositionally biased stretch (polar residues) spans 8–17; sequence NSPSESNSHV. Residues 93–115 form a helical membrane-spanning segment; that stretch reads RIRLFNFSLKLLTCLLYIVRVLL. Residues 116-152 lie on the Extracellular side of the membrane; it reads DNPEEGIGCWECEKQNYTLFNQSTKINWSHIFWVDRK. 2 N-linked (GlcNAc...) asparagine glycosylation sites follow: asparagine 131 and asparagine 136. Residues 153–175 form a helical membrane-spanning segment; sequence LPLWAVQVSIALISFLETMLLIY. Over 176–184 the chain is Cytoplasmic; it reads LSYKGNIWE. The helical transmembrane segment at 185-206 threads the bilayer; sequence QIFRISFILEMINTVPFIITIF. At 207 to 216 the chain is on the extracellular side; it reads WPPLRNLFIP. The chain crosses the membrane as a helical span at residues 217–229; sequence VFLNCWLAKYALE. The Cytoplasmic portion of the chain corresponds to 230–249; that stretch reads NMINDLHRAIQRTQSAMFNQ. Residues 250 to 272 form a helical membrane-spanning segment; that stretch reads VLILICTLLCLVFTGTCGIQHLE. At 273–279 the chain is on the extracellular side; sequence RAGEKLS. Positions 280–300 form an intramembrane region, pore-forming; it reads LFKSFYFCIVTFSTVGYGDVT. K(+) is bound by residues valine 294 and glycine 295. Residues 301–304 lie on the Extracellular side of the membrane; sequence PKIW. The chain crosses the membrane as a helical span at residues 305–326; it reads PSQLLVVIMICVALVVLPLQFE. Over 327-1201 the chain is Cytoplasmic; that stretch reads ELVYLWMERQ…NPETRDETQL (875 aa). An RCK N-terminal 1 domain is found at 350-486; the sequence is EKHVVLCVSS…FHVKFADHVV (137 aa). The Na(+) site is built by leucine 511, histidine 514, serine 536, and asparagine 538. 2 residues coordinate Zn(2+): cysteine 750 and cysteine 751. Arginine 753 and lysine 756 together coordinate K(+). 2 residues coordinate Na(+): arginine 753 and lysine 756. Positions 758 and 760 each coordinate Zn(2+). Residues asparagine 761, tyrosine 769, and glycine 770 each contribute to the K(+) site. Phenylalanine 771 provides a ligand contact to Na(+). An RCK N-terminal 2 domain is found at 773–913; the sequence is NKLIIVSAET…QFRAKDSYSL (141 aa). The K(+) site is built by serine 779, leucine 810, aspartate 812, glycine 834, and aspartate 857. The disordered stretch occupies residues 1175–1201; that stretch reads NDGHSRKSSCSNKLGPCNPETRDETQL.

The protein belongs to the potassium channel family. Calcium-activated (TC 1.A.1.3) subfamily. KCa4.1/KCNT1 sub-subfamily. As to quaternary structure, homotetramer; which constitutes the Na(+)-activated K(+) channel. Interacts with KCNT2; these heterodimer channels differ from the homomers in their unitary conductance, kinetic behavior, subcellular localization, and response to activation of protein kinase C. In terms of processing, phosphorylated by protein kinase C. Phosphorylation of the C-terminal domain increases channel activity.

The protein localises to the cell membrane. It catalyses the reaction K(+)(in) = K(+)(out). With respect to regulation, activated by high intracellular Na(+). In addition to activation by Na(+), is cooperatively activated by intracellular Cl(-) levels. Inhibited by Zn(2+). Activated upon stimulation of G-protein coupled receptors, such as CHRM1 and GRIA1. Sodium-activated K(+) channel. Acts as an important mediator of neuronal membrane excitability. Contributes to the delayed outward currents. Regulates of neuronal bursting in sensory neurons. Contributes to synaptic development and plasticity. The protein is Potassium channel subfamily T member 1 (KCNT1) of Gallus gallus (Chicken).